Here is a 704-residue protein sequence, read N- to C-terminus: Polyribonucleotide nucleotidyltransferase (704 aa).

Mg(2+) is bound by residues Asp-485 and Asp-491. Positions Pro-552–Ile-611 constitute a KH domain. The S1 motif domain occupies Gly-621–Arg-689.

This sequence belongs to the polyribonucleotide nucleotidyltransferase family. Component of the RNA degradosome, which is a multiprotein complex involved in RNA processing and mRNA degradation. Requires Mg(2+) as cofactor.

The protein localises to the cytoplasm. It catalyses the reaction RNA(n+1) + phosphate = RNA(n) + a ribonucleoside 5'-diphosphate. Its function is as follows. Involved in mRNA degradation. Catalyzes the phosphorolysis of single-stranded polyribonucleotides processively in the 3'- to 5'-direction. The sequence is that of Polyribonucleotide nucleotidyltransferase from Mannheimia succiniciproducens (strain KCTC 0769BP / MBEL55E).